The sequence spans 344 residues: Mitochondrial genome maintenance exonuclease 1 (344 aa).

Residues D238, D251, and K253 contribute to the active site. S343 carries the phosphoserine modification.

It belongs to the MGME1 family.

The protein resides in the mitochondrion. Functionally, metal-dependent single-stranded DNA (ssDNA) exonuclease involved in mitochondrial genome maintenance. Has preference for 5'-3' exonuclease activity but is also capable of endonuclease activity on linear substrates. Necessary for maintenance of proper 7S DNA levels. Probably involved in mitochondrial DNA (mtDNA) repair, possibly via the processing of displaced DNA containing Okazaki fragments during RNA-primed DNA synthesis on the lagging strand or via processing of DNA flaps during long-patch base excision repair. Specifically binds 5-hydroxymethylcytosine (5hmC)-containing DNA in stem cells. The protein is Mitochondrial genome maintenance exonuclease 1 of Homo sapiens (Human).